We begin with the raw amino-acid sequence, 366 residues long: Beta sliding clamp (366 aa).

It belongs to the beta sliding clamp family. In terms of assembly, forms a ring-shaped head-to-tail homodimer around DNA which binds and tethers DNA polymerases and other proteins to the DNA. The DNA replisome complex has a single clamp-loading complex (3 tau and 1 each of delta, delta', psi and chi subunits) which binds 3 Pol III cores (1 core on the leading strand and 2 on the lagging strand) each with a beta sliding clamp dimer. Additional proteins in the replisome are other copies of gamma, psi and chi, Ssb, DNA helicase and RNA primase.

Its subcellular location is the cytoplasm. In terms of biological role, confers DNA tethering and processivity to DNA polymerases and other proteins. Acts as a clamp, forming a ring around DNA (a reaction catalyzed by the clamp-loading complex) which diffuses in an ATP-independent manner freely and bidirectionally along dsDNA. Initially characterized for its ability to contact the catalytic subunit of DNA polymerase III (Pol III), a complex, multichain enzyme responsible for most of the replicative synthesis in bacteria; Pol III exhibits 3'-5' exonuclease proofreading activity. The beta chain is required for initiation of replication as well as for processivity of DNA replication. The sequence is that of Beta sliding clamp (dnaN) from Buchnera aphidicola subsp. Acyrthosiphon pisum (strain APS) (Acyrthosiphon pisum symbiotic bacterium).